Reading from the N-terminus, the 525-residue chain is Zinc finger C2HC domain-containing protein 1C (525 aa).

The segment covering 23–34 (AHGLHSAKHDPY) has biased composition (basic and acidic residues). Disordered stretches follow at residues 23–48 (AHGL…MGHL), 85–107 (CPHS…GKGL), and 145–171 (VHRK…PDSS). Polar residues predominate over residues 36–48 (QSDSPQRSSMGHL). The span at 90-102 (GISQQGSGNNAQG) shows a compositional bias: low complexity. A coiled-coil region spans residues 207–252 (TQIQRLEAAGESLQKEIRRKEILLREKLKKTEEGLRRIQREKKQAI). 3 disordered regions span residues 292 to 316 (SRNR…LSDY), 330 to 349 (NNKI…SQPA), and 356 to 379 (LQAS…EQEL). Polar residues predominate over residues 301 to 312 (CEQAQENSSPLQ). Positions 359–373 (SSLSGTPGSSGSSSS) are enriched in low complexity. C2HC/C3H-type zinc fingers lie at residues 378–407 (ELGK…MQGS) and 487–516 (DYVQ…IKNR). Residues Cys382, Cys385, His397, Cys401, Cys491, Cys494, His506, and Cys510 each coordinate Zn(2+).

The protein belongs to the ZC2HC1 family. Requires Zn(2+) as cofactor.

This Rattus norvegicus (Rat) protein is Zinc finger C2HC domain-containing protein 1C (Zc2hc1c).